Here is a 101-residue protein sequence, read N- to C-terminus: Phosphoprotein OPG062 (101 aa).

Residues 51–73 (PSSPACERRPSSPSRCERMNNPR) are disordered. A phosphoserine mark is found at Ser-53 and Ser-62. Over residues 56–70 (CERRPSSPSRCERMN) the composition is skewed to basic and acidic residues.

This sequence belongs to the orthopoxvirus OPG062 family. Self-associates to form high molecular-weight forms. Interacts with protein OPG157/A30. Interacts with host RICTOR and RPTOR; these interactions disrupt the mTORC1 and mTORC2 crosstalk. In terms of processing, phosphorylated on two serines. While these phosphorylations do not play a role in virion assembly; they are essential for the interaction with host RICTOR and RPTOR.

Its subcellular location is the virion. Its function is as follows. Plays an essential role in virion assembly and morphogenesis. Also plays a role in the inhibition of host immune response by dysregulating mTOR. Sequesters host RICTOR and RPTOR, thereby disrupting mTORC1 and mTORC2 crosstalk. In turn, blocks the host antiviral response in part through mTOR-dependent degradation of cGAS, the primary poxvirus sensor. The chain is Phosphoprotein OPG062 (OPG062) from Vaccinia virus (strain Western Reserve) (VACV).